The primary structure comprises 387 residues: EARP-interacting protein homolog (387 aa).

4 WD repeats span residues 132-172 (SAHG…AKAT), 182-222 (KGQL…QIYC), 226-266 (AHGQ…EPVK), and 270-310 (EHSH…SEPF). Residues 309-337 (PFGHLVDDDDLSDPEENQQEDKGKEPLQD) form a disordered region. The span at 315-326 (DDDDLSDPEENQ) shows a compositional bias: acidic residues. Residues 345 to 385 (EHEDSVYAVEWSAADPWLFASLSYDGRLVINRVPRALKYRI) form a WD 5 repeat.

Belongs to the WD repeat EIPR1 family.

The protein resides in the golgi apparatus. It localises to the trans-Golgi network. Its function is as follows. May act as a component of endosomal retrieval machinery that is involved in protein transport from early endosomes to either recycling endosomes or the trans-Golgi network. In Danio rerio (Zebrafish), this protein is EARP-interacting protein homolog.